Here is a 357-residue protein sequence, read N- to C-terminus: MSDEKTEQPTDKKLEDAHRDGETAKSADLTAAAVLLSGCLLLALTASVFGERWRALLDLALDVDSSRHPLMTLKQTISHFALQLVLMTLPVGFVFALVAWIATWAQTGVVLSFKPVELKMSAINPASGLKRIFSVRSMIDLVKMIIKGVAVAAAVWKLILILMPSIVGAAYQSVMDIAEIGMTLLVRLLAAGGGLFLILGAADFGIQRWLFIRDHRMSKDEVKREHKNSEGDPHIKGERKKLARELADEAKPKQSVAGAQAVVVNPTHYAVAIRYAPEEYGLPRIIAKGVDDEALALREEAAALGIPIVGNPPLARSLYRVDLYGPVPEPLFETVAEVLAWVGEMGASGTPGAEPQH.

The segment at 1–21 is disordered; that stretch reads MSDEKTEQPTDKKLEDAHRDG. 5 consecutive transmembrane segments (helical) span residues 29 to 49, 84 to 104, 149 to 169, 180 to 200, and 323 to 343; these read LTAAAVLLSGCLLLALTASVF, LVLMTLPVGFVFALVAWIATW, VAVAAAVWKLILILMPSIVGA, IGMTLLVRLLAAGGGLFLILG, and LYGPVPEPLFETVAEVLAWVG.

The protein belongs to the type III secretion exporter family.

Its subcellular location is the cell membrane. In terms of biological role, involved in the secretion of PopA, a proteinaceous elicitor of the hypersensitivity response in plants. This is Hypersensitivity response secretion protein HrcU (hrcU) from Ralstonia nicotianae (strain ATCC BAA-1114 / GMI1000) (Ralstonia solanacearum).